The following is a 138-amino-acid chain: Basic phospholipase A2 RV-4 (138 aa).

A signal peptide spans 1 to 16 (MRTLWIVAVCLIGVEG). Disulfide bonds link Cys-42/Cys-131, Cys-44/Cys-60, Cys-59/Cys-111, Cys-65/Cys-138, Cys-66/Cys-104, Cys-73/Cys-97, and Cys-91/Cys-102. Ca(2+) is bound by residues Tyr-43, Gly-45, and Gly-47. His-63 is a catalytic residue. Position 64 (Asp-64) interacts with Ca(2+). Asp-105 is a catalytic residue.

The protein belongs to the phospholipase A2 family. Group II subfamily. D49 sub-subfamily. In terms of assembly, heterodimer of a weakly toxic basic protein having phospholipase A2 activity (RV-4) and a non-toxic acidic protein which inhibits its enzymatic activity but potentiates its lethal potency and neurotoxicity (RV-7). Requires Ca(2+) as cofactor. In terms of tissue distribution, expressed by the venom gland.

It is found in the secreted. The catalysed reaction is a 1,2-diacyl-sn-glycero-3-phosphocholine + H2O = a 1-acyl-sn-glycero-3-phosphocholine + a fatty acid + H(+). Functionally, heterodimer RV-4/RV-7: acts as a presynaptic neurotoxin. Its function is as follows. Monomer: snake venom phospholipase A2 (PLA2) that acts as a presynaptic neurotoxin. PLA2 catalyzes the calcium-dependent hydrolysis of the 2-acyl groups in 3-sn-phosphoglycerides. This Daboia siamensis (Eastern Russel's viper) protein is Basic phospholipase A2 RV-4.